A 451-amino-acid polypeptide reads, in one-letter code: UDP-N-acetylmuramoylalanine--D-glutamate ligase (451 aa).

119–125 lines the ATP pocket; it reads GSNGKTT.

Belongs to the MurCDEF family.

The protein localises to the cytoplasm. The enzyme catalyses UDP-N-acetyl-alpha-D-muramoyl-L-alanine + D-glutamate + ATP = UDP-N-acetyl-alpha-D-muramoyl-L-alanyl-D-glutamate + ADP + phosphate + H(+). The protein operates within cell wall biogenesis; peptidoglycan biosynthesis. Its function is as follows. Cell wall formation. Catalyzes the addition of glutamate to the nucleotide precursor UDP-N-acetylmuramoyl-L-alanine (UMA). In Streptococcus mutans serotype c (strain ATCC 700610 / UA159), this protein is UDP-N-acetylmuramoylalanine--D-glutamate ligase.